The following is an 88-amino-acid chain: uncharacterized protein (88 aa).

This is an uncharacterized protein from Sputnik virophage.